Here is a 3584-residue protein sequence, read N- to C-terminus: D-lysergyl-peptide-synthetase subunit 1 (3584 aa).

Positions 25–44 are disordered; it reads IESINGDKNKSERHTASSSA. Positions 29–39 are enriched in basic and acidic residues; it reads NGDKNKSERHT. Positions 307 to 706 are adenylation (A) domain 1; that stretch reads SCCSRPNSQA…LGRKDDQVKI (400 aa). A Carrier 1 domain is found at 848–917; it reads REKLLQALFA…TLREIVIVST (70 aa). Ser-880 carries the post-translational modification O-(pantetheine 4'-phosphoryl)serine. The condensation (C) domain 1 stretch occupies residues 962 to 1353; the sequence is EDIYPCTHLQ…EHILTQIHSN (392 aa). The tract at residues 1396 to 1803 is adenylation (A) domain 2; that stretch reads QAKCQAQPDA…RRKDAQVKIR (408 aa). Residues 1948 to 2016 enclose the Carrier 2 domain; that stretch reads TEHEISAIWA…TIRKLALARG (69 aa). The residue at position 1980 (Ser-1980) is an O-(pantetheine 4'-phosphoryl)serine. The tract at residues 2066 to 2483 is condensation (C) domain 2; that stretch reads ERIYPCSPIQ…ALPVLDEDQM (418 aa). The tract at residues 2508-2906 is adenylation (A) domain 3; sequence QCIRCPDSPS…GRNDDQVKVR (399 aa). The Carrier 3 domain occupies 3041–3109; it reads MEAELQQLVG…RLSDLARIVE (69 aa). Residue Ser-3073 is modified to O-(pantetheine 4'-phosphoryl)serine. The cyclization (Cyc) domain stretch occupies residues 3174–3472; sequence LYFSKPMASE…VAKSTTWSSD (299 aa).

This sequence belongs to the NRP synthetase family.

It participates in alkaloid biosynthesis; ergot alkaloid biosynthesis. D-lysergyl-peptide-synthetase subunit 1; part of the gene cluster that mediates the biosynthesis of fungal ergot alkaloid. DmaW catalyzes the first step of ergot alkaloid biosynthesis by condensing dimethylallyl diphosphate (DMAP) and tryptophan to form 4-dimethylallyl-L-tryptophan. The second step is catalyzed by the methyltransferase easF that methylates 4-dimethylallyl-L-tryptophan in the presence of S-adenosyl-L-methionine, resulting in the formation of 4-dimethylallyl-L-abrine. The catalase easC and the FAD-dependent oxidoreductase easE then transform 4-dimethylallyl-L-abrine to chanoclavine-I which is further oxidized by easD in the presence of NAD(+), resulting in the formation of chanoclavine-I aldehyde. Agroclavine dehydrogenase easG then mediates the conversion of chanoclavine-I aldehyde to agroclavine via a non-enzymatic adduct reaction: the substrate is an iminium intermediate that is formed spontaneously from chanoclavine-I aldehyde in the presence of glutathione. The presence of easA is not required to complete this reaction. Further conversion of agroclavine to paspalic acid is a two-step process involving oxidation of agroclavine to elymoclavine and of elymoclavine to paspalic acid, the second step being performed by the elymoclavine oxidase cloA. Paspalic acid is then further converted to D-lysergic acid. Ergopeptines are assembled from D-lysergic acid and three different amino acids by the D-lysergyl-peptide-synthetases composed each of a monomudular and a trimodular nonribosomal peptide synthetase subunit. LpsB and lpsC encode the monomodular subunits responsible for D-lysergic acid activation and incorporation into the ergopeptine backbone. LpsA1 and A2 subunits encode the trimodular nonribosomal peptide synthetase assembling the tripeptide portion of ergopeptines. LpsA1 is responsible for formation of the major ergopeptine, ergotamine, and lpsA2 for alpha-ergocryptine, the minor ergopeptine of the total alkaloid mixture elaborated by C.purpurea. D-lysergyl-tripeptides are assembled by the nonribosomal peptide synthetases and released as N-(D-lysergyl-aminoacyl)-lactams. Cyclolization of the D-lysergyl-tripeptides is performed by the Fe(2+)/2-ketoglutarate-dependent dioxygenase easH which introduces a hydroxyl group into N-(D-lysergyl-aminoacyl)-lactam at alpha-C of the aminoacyl residue followed by spontaneous condensation with the terminal lactam carbonyl group. This chain is D-lysergyl-peptide-synthetase subunit 1, found in Claviceps purpurea (strain 20.1) (Ergot fungus).